A 432-amino-acid polypeptide reads, in one-letter code: Glutamyl-tRNA reductase (432 aa).

Substrate contacts are provided by residues 55-58 (TCNR), S114, 119-121 (ETQ), and Q125. The active-site Nucleophile is C56. 194–199 (GAGEMI) provides a ligand contact to NADP(+).

The protein belongs to the glutamyl-tRNA reductase family. In terms of assembly, homodimer.

It carries out the reaction (S)-4-amino-5-oxopentanoate + tRNA(Glu) + NADP(+) = L-glutamyl-tRNA(Glu) + NADPH + H(+). It participates in porphyrin-containing compound metabolism; protoporphyrin-IX biosynthesis; 5-aminolevulinate from L-glutamyl-tRNA(Glu): step 1/2. Functionally, catalyzes the NADPH-dependent reduction of glutamyl-tRNA(Glu) to glutamate 1-semialdehyde (GSA). The polypeptide is Glutamyl-tRNA reductase (Burkholderia orbicola (strain MC0-3)).